Consider the following 599-residue polypeptide: Elongation factor 4 (599 aa).

The 183-residue stretch at 2 to 184 folds into the tr-type G domain; sequence KNIRNFSIIA…RLVRDIPPPE (183 aa). Residues 14–19 and 131–134 contribute to the GTP site; these read DHGKST and NKID.

The protein belongs to the TRAFAC class translation factor GTPase superfamily. Classic translation factor GTPase family. LepA subfamily.

It is found in the cell inner membrane. The catalysed reaction is GTP + H2O = GDP + phosphate + H(+). Its function is as follows. Required for accurate and efficient protein synthesis under certain stress conditions. May act as a fidelity factor of the translation reaction, by catalyzing a one-codon backward translocation of tRNAs on improperly translocated ribosomes. Back-translocation proceeds from a post-translocation (POST) complex to a pre-translocation (PRE) complex, thus giving elongation factor G a second chance to translocate the tRNAs correctly. Binds to ribosomes in a GTP-dependent manner. This chain is Elongation factor 4, found in Shigella dysenteriae serotype 1 (strain Sd197).